A 56-amino-acid polypeptide reads, in one-letter code: MAVQQNKKSRSKRGMRRSHDALSTAQLSVDATSGELHLRHNVTADGFYRGKKVINK.

The disordered stretch occupies residues 1–26; sequence MAVQQNKKSRSKRGMRRSHDALSTAQ. Basic residues predominate over residues 7 to 16; the sequence is KKSRSKRGMR.

This sequence belongs to the bacterial ribosomal protein bL32 family.

This is Large ribosomal subunit protein bL32 from Shewanella denitrificans (strain OS217 / ATCC BAA-1090 / DSM 15013).